Here is a 189-residue protein sequence, read N- to C-terminus: Ion-translocating oxidoreductase complex subunit B (189 aa).

Positions 1–26 are hydrophobic; the sequence is MSAIVIAIVVLTILALVFGVLLGFAA. The 4Fe-4S domain occupies 32 to 90; it reads EGNPLTDQIEALLPQTQCGQCGYPGCRPYAEAIANGDKVNKCPPGGAATMEKLADLMGV. [4Fe-4S] cluster-binding residues include C49, C52, C57, C73, C114, C117, C120, C124, C144, C147, C150, and C154. 2 4Fe-4S ferredoxin-type domains span residues 105-134 and 135-164; these read KVAY…GSGK and LMHT…MLPV.

Belongs to the 4Fe4S bacterial-type ferredoxin family. RnfB subfamily. In terms of assembly, the complex is composed of six subunits: RnfA, RnfB, RnfC, RnfD, RnfE and RnfG. [4Fe-4S] cluster is required as a cofactor.

It is found in the cell inner membrane. In terms of biological role, part of a membrane-bound complex that couples electron transfer with translocation of ions across the membrane. The polypeptide is Ion-translocating oxidoreductase complex subunit B (Shewanella pealeana (strain ATCC 700345 / ANG-SQ1)).